A 274-amino-acid chain; its full sequence is MEALRQRIEAAFEARADITPSTVDASVRNDVQNVINMLDKGELRVAEKIDGQWHVHQWLKKAVLLSFRIFDNAVIDGAETKYFDKVPLKFAEYDEARFKAEAIRVVPSATVRKGSFIGKNTVLMPSYVNLGAYVDEGTMVDTWATVGSCAQIGKNVHLSGGVGIGGVLEPLQAGPTIIEDNCFIGARSEIVEGVVVEEGSVISMGVYIGQSTRIYDRETGEIHYGRVPAGSVVVSGNLPSACGKYSLYAAIIVKKVDAKTRGKVGINELLRIVD.

Residues Arg104 and Asp141 each coordinate substrate.

This sequence belongs to the transferase hexapeptide repeat family. As to quaternary structure, homotrimer.

It localises to the cytoplasm. The enzyme catalyses (S)-2,3,4,5-tetrahydrodipicolinate + succinyl-CoA + H2O = (S)-2-succinylamino-6-oxoheptanedioate + CoA. It functions in the pathway amino-acid biosynthesis; L-lysine biosynthesis via DAP pathway; LL-2,6-diaminopimelate from (S)-tetrahydrodipicolinate (succinylase route): step 1/3. This Shewanella sp. (strain ANA-3) protein is 2,3,4,5-tetrahydropyridine-2,6-dicarboxylate N-succinyltransferase.